The chain runs to 192 residues: Nucleoside triphosphate pyrophosphatase (192 aa).

Asp73 functions as the Proton acceptor in the catalytic mechanism.

The protein belongs to the Maf family. The cofactor is a divalent metal cation.

Its subcellular location is the cytoplasm. It catalyses the reaction a ribonucleoside 5'-triphosphate + H2O = a ribonucleoside 5'-phosphate + diphosphate + H(+). It carries out the reaction a 2'-deoxyribonucleoside 5'-triphosphate + H2O = a 2'-deoxyribonucleoside 5'-phosphate + diphosphate + H(+). Its function is as follows. Nucleoside triphosphate pyrophosphatase. May have a dual role in cell division arrest and in preventing the incorporation of modified nucleotides into cellular nucleic acids. This Ehrlichia ruminantium (strain Welgevonden) protein is Nucleoside triphosphate pyrophosphatase.